A 156-amino-acid chain; its full sequence is Small ribosomal subunit protein uS7 (156 aa).

The protein belongs to the universal ribosomal protein uS7 family. Part of the 30S ribosomal subunit. Contacts proteins S9 and S11.

In terms of biological role, one of the primary rRNA binding proteins, it binds directly to 16S rRNA where it nucleates assembly of the head domain of the 30S subunit. Is located at the subunit interface close to the decoding center, probably blocks exit of the E-site tRNA. The sequence is that of Small ribosomal subunit protein uS7 from Rhodopseudomonas palustris (strain BisB5).